Consider the following 424-residue polypeptide: Histidine--tRNA ligase (424 aa).

Belongs to the class-II aminoacyl-tRNA synthetase family. Homodimer.

Its subcellular location is the cytoplasm. It carries out the reaction tRNA(His) + L-histidine + ATP = L-histidyl-tRNA(His) + AMP + diphosphate + H(+). In Bacillus subtilis (strain 168), this protein is Histidine--tRNA ligase (hisS).